Here is a 187-residue protein sequence, read N- to C-terminus: MIILASSSPRRREILGKFFDIKVYPSEIDERSNARSPKERALDLARKKALAVHSRFPNDTIVAADTIVVLDGEVLGKPKSEREARVMLEKLSGKVHSVITGYCIIHNGKVVGGVEETKVKFRNLSEDLIEWYLSTEEWKDKAGSYGIQGYASIFVEWIQGDYYNVVGLPIKVVVELIKLGFKPRPKR.

D65 serves as the catalytic Proton acceptor.

The protein belongs to the Maf family. YhdE subfamily. A divalent metal cation is required as a cofactor.

The protein localises to the cytoplasm. The enzyme catalyses dTTP + H2O = dTMP + diphosphate + H(+). It carries out the reaction UTP + H2O = UMP + diphosphate + H(+). In terms of biological role, nucleoside triphosphate pyrophosphatase that hydrolyzes dTTP and UTP. May have a dual role in cell division arrest and in preventing the incorporation of modified nucleotides into cellular nucleic acids. The polypeptide is dTTP/UTP pyrophosphatase (Pyrococcus abyssi (strain GE5 / Orsay)).